The following is a 58-amino-acid chain: Succinate dehydrogenase subunit 8A, mitochondrial (58 aa).

Component of complex II composed of eight subunits in plants: four classical SDH subunits SDH1, SDH2, SDH3 and SDH4 (a flavoprotein (FP), an iron-sulfur protein (IP), and a cytochrome b composed of a large and a small subunit.), as well as four subunits unknown in mitochondria from bacteria and heterotrophic eukaryotes.

Its subcellular location is the mitochondrion inner membrane. It participates in carbohydrate metabolism; tricarboxylic acid cycle. The polypeptide is Succinate dehydrogenase subunit 8A, mitochondrial (Oryza sativa subsp. japonica (Rice)).